Here is a 461-residue protein sequence, read N- to C-terminus: uncharacterized protein (461 aa).

2 disordered regions span residues 254–273 (NNNNNNNNNNNNNNNNNNNN) and 368–414 (QPSQ…NNNS). Over residues 381–413 (NNNNNNNNNNNNNNNNNNNNNNNNNNNNNNNNN) the composition is skewed to low complexity.

This is an uncharacterized protein from Dictyostelium discoideum (Social amoeba).